We begin with the raw amino-acid sequence, 156 residues long: SsrA-binding protein (156 aa).

It belongs to the SmpB family.

The protein localises to the cytoplasm. Required for rescue of stalled ribosomes mediated by trans-translation. Binds to transfer-messenger RNA (tmRNA), required for stable association of tmRNA with ribosomes. tmRNA and SmpB together mimic tRNA shape, replacing the anticodon stem-loop with SmpB. tmRNA is encoded by the ssrA gene; the 2 termini fold to resemble tRNA(Ala) and it encodes a 'tag peptide', a short internal open reading frame. During trans-translation Ala-aminoacylated tmRNA acts like a tRNA, entering the A-site of stalled ribosomes, displacing the stalled mRNA. The ribosome then switches to translate the ORF on the tmRNA; the nascent peptide is terminated with the 'tag peptide' encoded by the tmRNA and targeted for degradation. The ribosome is freed to recommence translation, which seems to be the essential function of trans-translation. The protein is SsrA-binding protein of Maricaulis maris (strain MCS10) (Caulobacter maris).